We begin with the raw amino-acid sequence, 367 residues long: 3-dehydroquinate synthase (367 aa).

NAD(+) is bound by residues 69–74, 103–107, 127–128, K140, K149, and 167–170; these read DGEAFK, GVVGD, TT, and TLAT. Residues E182, H245, and H262 each coordinate Zn(2+).

It belongs to the sugar phosphate cyclases superfamily. Dehydroquinate synthase family. Requires Co(2+) as cofactor. It depends on Zn(2+) as a cofactor. NAD(+) is required as a cofactor.

It is found in the cytoplasm. The catalysed reaction is 7-phospho-2-dehydro-3-deoxy-D-arabino-heptonate = 3-dehydroquinate + phosphate. The protein operates within metabolic intermediate biosynthesis; chorismate biosynthesis; chorismate from D-erythrose 4-phosphate and phosphoenolpyruvate: step 2/7. Its function is as follows. Catalyzes the conversion of 3-deoxy-D-arabino-heptulosonate 7-phosphate (DAHP) to dehydroquinate (DHQ). The polypeptide is 3-dehydroquinate synthase (Azotobacter vinelandii (strain DJ / ATCC BAA-1303)).